The primary structure comprises 125 residues: Ribosome-binding factor A (125 aa).

This sequence belongs to the RbfA family. Monomer. Binds 30S ribosomal subunits, but not 50S ribosomal subunits or 70S ribosomes.

The protein resides in the cytoplasm. Functionally, one of several proteins that assist in the late maturation steps of the functional core of the 30S ribosomal subunit. Associates with free 30S ribosomal subunits (but not with 30S subunits that are part of 70S ribosomes or polysomes). Required for efficient processing of 16S rRNA. May interact with the 5'-terminal helix region of 16S rRNA. In Xylella fastidiosa (strain M23), this protein is Ribosome-binding factor A.